A 251-amino-acid polypeptide reads, in one-letter code: FHA domain-containing protein FHA1 (251 aa).

The FHA domain maps to 32-89 (IILGRNSKKSTVDVDLSSLGGGMNISRNHARIFYDFTRRRFSLEVLGKNGCFVEGVLH). Positions 163 to 174 (EYDDEDDDEEED) are enriched in acidic residues. The disordered stretch occupies residues 163 to 209 (EYDDEDDDEEEDIRGSGKKTWRDGHEGVYASGEKKREGRSKADREAD). Basic and acidic residues predominate over residues 182 to 206 (TWRDGHEGVYASGEKKREGRSKADR).

Expressed in roots and vascular tissues near the shoot apex in young seedlings.

The protein localises to the nucleus. May play a role in the control of plant organ development. Does not show transactivation activity in yeast. The chain is FHA domain-containing protein FHA1 from Arabidopsis thaliana (Mouse-ear cress).